A 355-amino-acid chain; its full sequence is 5-formaminoimidazole-4-carboxamide-1-(beta)-D-ribofuranosyl 5'-monophosphate synthetase (355 aa).

Residues His27 and Ser94 each coordinate 5-amino-1-(5-phospho-beta-D-ribosyl)imidazole-4-carboxamide. In terms of domain architecture, ATP-grasp spans 101–332 (TESFAELAVP…YSDMIEENLS (232 aa)). Residues 144–195 (PEKI…TRYY) and Glu225 contribute to the ATP site. Asn254 serves as a coordination point for 5-amino-1-(5-phospho-beta-D-ribosyl)imidazole-4-carboxamide. Residues Glu292 and Glu305 each contribute to the Mg(2+) site.

Belongs to the phosphohexose mutase family. The cofactor is Mg(2+). Mn(2+) is required as a cofactor.

The catalysed reaction is 5-amino-1-(5-phospho-beta-D-ribosyl)imidazole-4-carboxamide + formate + ATP = 5-formamido-1-(5-phospho-D-ribosyl)imidazole-4-carboxamide + ADP + phosphate. It functions in the pathway purine metabolism; IMP biosynthesis via de novo pathway; 5-formamido-1-(5-phospho-D-ribosyl)imidazole-4-carboxamide from 5-amino-1-(5-phospho-D-ribosyl)imidazole-4-carboxamide (formate route): step 1/1. Functionally, catalyzes the ATP- and formate-dependent formylation of 5-aminoimidazole-4-carboxamide-1-beta-d-ribofuranosyl 5'-monophosphate (AICAR) to 5-formaminoimidazole-4-carboxamide-1-beta-d-ribofuranosyl 5'-monophosphate (FAICAR) in the absence of folates. In Methanococcoides burtonii (strain DSM 6242 / NBRC 107633 / OCM 468 / ACE-M), this protein is 5-formaminoimidazole-4-carboxamide-1-(beta)-D-ribofuranosyl 5'-monophosphate synthetase.